Consider the following 226-residue polypeptide: ATP synthase subunit a (226 aa).

6 consecutive transmembrane segments (helical) span residues 17–37 (FSYF…AMMA), 79–99 (LVAT…IPGF), 105–125 (SLNL…FEGI), 134–154 (FAHF…IEIV), 176–196 (LFLM…AYVL), and 199–219 (FMAF…LAGA).

The protein belongs to the ATPase A chain family. F-type ATPases have 2 components, CF(1) - the catalytic core - and CF(0) - the membrane proton channel. CF(1) has five subunits: alpha(3), beta(3), gamma(1), delta(1), epsilon(1). CF(0) has three main subunits: a(1), b(2) and c(9-12). The alpha and beta chains form an alternating ring which encloses part of the gamma chain. CF(1) is attached to CF(0) by a central stalk formed by the gamma and epsilon chains, while a peripheral stalk is formed by the delta and b chains.

It localises to the cell inner membrane. Key component of the proton channel; it plays a direct role in the translocation of protons across the membrane. The polypeptide is ATP synthase subunit a (Campylobacter jejuni subsp. jejuni serotype O:6 (strain 81116 / NCTC 11828)).